The chain runs to 383 residues: Protein RecA (383 aa).

An ATP-binding site is contributed by 79-86 (GPESSGKT). Residues 347-369 (IEEDNTEEKQSSKEKETDEKADK) are disordered. Over residues 353–369 (EEKQSSKEKETDEKADK) the composition is skewed to basic and acidic residues.

This sequence belongs to the RecA family.

The protein resides in the cytoplasm. Can catalyze the hydrolysis of ATP in the presence of single-stranded DNA, the ATP-dependent uptake of single-stranded DNA by duplex DNA, and the ATP-dependent hybridization of homologous single-stranded DNAs. It interacts with LexA causing its activation and leading to its autocatalytic cleavage. This chain is Protein RecA, found in Streptococcus mutans serotype c (strain ATCC 700610 / UA159).